Here is a 444-residue protein sequence, read N- to C-terminus: tRNA-2-methylthio-N(6)-dimethylallyladenosine synthase (444 aa).

In terms of domain architecture, MTTase N-terminal spans 8-122; it reads KTFYIETFGC…LAEMLVQIES (115 aa). Residues Cys17, Cys53, Cys85, Cys160, Cys164, and Cys167 each coordinate [4Fe-4S] cluster. Residues 146–376 form the Radical SAM core domain; that stretch reads RGNAHRGYIT…MEHQREIQRA (231 aa). The region spanning 379–444 is the TRAM domain; sequence RKHIGETIEV…PNSLVGELVG (66 aa).

The protein belongs to the methylthiotransferase family. MiaB subfamily. Monomer. Requires [4Fe-4S] cluster as cofactor.

Its subcellular location is the cytoplasm. The catalysed reaction is N(6)-dimethylallyladenosine(37) in tRNA + (sulfur carrier)-SH + AH2 + 2 S-adenosyl-L-methionine = 2-methylsulfanyl-N(6)-dimethylallyladenosine(37) in tRNA + (sulfur carrier)-H + 5'-deoxyadenosine + L-methionine + A + S-adenosyl-L-homocysteine + 2 H(+). Functionally, catalyzes the methylthiolation of N6-(dimethylallyl)adenosine (i(6)A), leading to the formation of 2-methylthio-N6-(dimethylallyl)adenosine (ms(2)i(6)A) at position 37 in tRNAs that read codons beginning with uridine. This is tRNA-2-methylthio-N(6)-dimethylallyladenosine synthase from Koribacter versatilis (strain Ellin345).